A 317-amino-acid polypeptide reads, in one-letter code: Zinc finger protein 771 (317 aa).

Positions 1-17 are enriched in acidic residues; the sequence is MPGEQQAEEEEEEEMQE. The segment at 1-63 is disordered; it reads MPGEQQAEEE…APSADPARPH (63 aa). A Glycyl lysine isopeptide (Lys-Gly) (interchain with G-Cter in SUMO2) cross-link involves residue Lys33. Residues 33–49 are compositionally biased toward basic and acidic residues; the sequence is KYEVVKLKIPMDNKEVP. 8 C2H2-type zinc fingers span residues 63–85, 91–113, 119–141, 147–169, 175–197, 203–225, 231–253, and 259–281; these read HACPDCGRAFARRSTLAKHARTH, FGCTECGRRFSQKSALTKHGRTH, YECPECDKRFSAASNLRQHRRRH, YACAHCGRRFAQSSNYAQHLRVH, YACPDCGRAFGGSSCLARHRRTH, YACADCGTRFAQSSALAKHRRVH, HRCAVCGRRFGHRSNLAEHARTH, and YPCAECGRRFRLSSHFIRHRRAH.

This sequence belongs to the krueppel C2H2-type zinc-finger protein family.

It localises to the nucleus. In terms of biological role, may be involved in transcriptional regulation. In Homo sapiens (Human), this protein is Zinc finger protein 771 (ZNF771).